We begin with the raw amino-acid sequence, 320 residues long: Dermonecrotic toxin LarSicTox-alphaIB2a (320 aa).

The first 15 residues, 1-15, serve as a signal peptide directing secretion; it reads MSHSSTALLHPYVAA. A propeptide spanning residues 16–41 is cleaved from the precursor; that stretch reads RATEKFAPIYFFCHPLQSAETDVAER. The active site involves histidine 52. The Mg(2+) site is built by glutamate 72 and aspartate 74. The active-site Nucleophile is the histidine 88. 2 disulfide bridges follow: cysteine 92-cysteine 98 and cysteine 94-cysteine 237. Aspartate 132 serves as a coordination point for Mg(2+). N-linked (GlcNAc...) asparagine glycosylation occurs at asparagine 297.

Belongs to the arthropod phospholipase D family. Class II subfamily. Mg(2+) serves as cofactor. As to expression, expressed by the venom gland.

The protein localises to the secreted. It catalyses the reaction an N-(acyl)-sphingosylphosphocholine = an N-(acyl)-sphingosyl-1,3-cyclic phosphate + choline. The catalysed reaction is an N-(acyl)-sphingosylphosphoethanolamine = an N-(acyl)-sphingosyl-1,3-cyclic phosphate + ethanolamine. It carries out the reaction a 1-acyl-sn-glycero-3-phosphocholine = a 1-acyl-sn-glycero-2,3-cyclic phosphate + choline. The enzyme catalyses a 1-acyl-sn-glycero-3-phosphoethanolamine = a 1-acyl-sn-glycero-2,3-cyclic phosphate + ethanolamine. In terms of biological role, dermonecrotic toxins cleave the phosphodiester linkage between the phosphate and headgroup of certain phospholipids (sphingolipid and lysolipid substrates), forming an alcohol (often choline) and a cyclic phosphate. This toxin acts on sphingomyelin (SM). It may also act on ceramide phosphoethanolamine (CPE), lysophosphatidylcholine (LPC) and lysophosphatidylethanolamine (LPE), but not on lysophosphatidylserine (LPS), and lysophosphatidylglycerol (LPG). It acts by transphosphatidylation, releasing exclusively cyclic phosphate products as second products. Induces dermonecrosis, hemolysis, increased vascular permeability, edema, inflammatory response, and platelet aggregation. The polypeptide is Dermonecrotic toxin LarSicTox-alphaIB2a (Loxosceles arizonica (Arizona brown spider)).